The sequence spans 210 residues: Na(+)-translocating NADH-quinone reductase subunit D (210 aa).

5 helical membrane passes run 42–62 (FVMT…VSLI), 72–92 (IIVQ…VLKA), 103–123 (VFVS…AFAM), 131–151 (FIDG…VAFF), and 178–198 (NGLM…IWAI).

This sequence belongs to the NqrDE/RnfAE family. In terms of assembly, composed of six subunits; NqrA, NqrB, NqrC, NqrD, NqrE and NqrF.

It is found in the cell inner membrane. The catalysed reaction is a ubiquinone + n Na(+)(in) + NADH + H(+) = a ubiquinol + n Na(+)(out) + NAD(+). NQR complex catalyzes the reduction of ubiquinone-1 to ubiquinol by two successive reactions, coupled with the transport of Na(+) ions from the cytoplasm to the periplasm. NqrA to NqrE are probably involved in the second step, the conversion of ubisemiquinone to ubiquinol. This Aliivibrio fischeri (strain ATCC 700601 / ES114) (Vibrio fischeri) protein is Na(+)-translocating NADH-quinone reductase subunit D.